The following is a 647-amino-acid chain: UvrABC system protein C (647 aa).

In terms of domain architecture, GIY-YIG spans 26-106; sequence SEPGCYLMRD…IKEHQPYFNI (81 aa). The UVR domain maps to 216–251; the sequence is DQLKDLLHKQMLIQSKLQEFEKAAIIRDQIKGIEQL.

Belongs to the UvrC family. Interacts with UvrB in an incision complex.

The protein localises to the cytoplasm. Its function is as follows. The UvrABC repair system catalyzes the recognition and processing of DNA lesions. UvrC both incises the 5' and 3' sides of the lesion. The N-terminal half is responsible for the 3' incision and the C-terminal half is responsible for the 5' incision. The chain is UvrABC system protein C from Prochlorococcus marinus (strain MIT 9211).